Here is a 114-residue protein sequence, read N- to C-terminus: Tyrosine-protein phosphatase 27 (114 aa).

One can recognise a Tyrosine-protein phosphatase domain in the interval 1–114; sequence WQMIVEHKCC…ELGNDNPIVV (114 aa). Residue Asp82 coordinates substrate.

It belongs to the protein-tyrosine phosphatase family.

It carries out the reaction O-phospho-L-tyrosyl-[protein] + H2O = L-tyrosyl-[protein] + phosphate. The sequence is that of Tyrosine-protein phosphatase 27 (STY-27) from Styela plicata (Wrinkled sea squirt).